Reading from the N-terminus, the 158-residue chain is Phosphopantetheine adenylyltransferase (158 aa).

Residue S8 participates in substrate binding. ATP is bound by residues 8-9 (SF) and H16. K40, T72, and R86 together coordinate substrate. ATP is bound by residues 87–89 (GLR), E97, and 122–128 (HSFLSSS).

It belongs to the bacterial CoaD family. As to quaternary structure, homohexamer. It depends on Mg(2+) as a cofactor.

It localises to the cytoplasm. It carries out the reaction (R)-4'-phosphopantetheine + ATP + H(+) = 3'-dephospho-CoA + diphosphate. Its pathway is cofactor biosynthesis; coenzyme A biosynthesis; CoA from (R)-pantothenate: step 4/5. Reversibly transfers an adenylyl group from ATP to 4'-phosphopantetheine, yielding dephospho-CoA (dPCoA) and pyrophosphate. In Prochlorococcus marinus (strain NATL2A), this protein is Phosphopantetheine adenylyltransferase.